A 402-amino-acid chain; its full sequence is Multidrug resistance protein MdtH (402 aa).

Residues 1-12 (MSRVSQARNLGK) are Cytoplasmic-facing. A helical transmembrane segment spans residues 13–33 (YFLLIDNMLVVLGFFVVFPLI). Residues 34–98 (SIRFVDQMGW…GFATMGIAHE (65 aa)) are Periplasmic-facing. The helical transmembrane segment at 99-116 (PWLLWFSCLLSGLGGTLF) threads the bilayer. The Cytoplasmic portion of the chain corresponds to 117 to 138 (DPPRSALVVKLIRPQQRGRFFS). Residues 139-159 (LLMMQDSASAVIGALLGSWLL) form a helical membrane-spanning segment. Topologically, residues 160–164 (QYDFR) are periplasmic. Residues 165 to 185 (LVCATGPVLFVLCAAFNAWLL) traverse the membrane as a helical segment. Over 186–213 (PAWKLSTVRTPVREGMTRVMRDKRFVTY) the chain is Cytoplasmic. Residues 214 to 234 (VLTLAGYYMLAVQVMLMLPIM) form a helical membrane-spanning segment. The Periplasmic portion of the chain corresponds to 235-243 (VNDVAGAPS). A helical membrane pass occupies residues 244-264 (AVKWMYAIEACLSLTLLYPIA). At 265–276 (RWSEKHFRLEHR) the chain is on the cytoplasmic side. Residues 277-297 (LMAGLLIMSLSMMPVGMVSGL) form a helical membrane-spanning segment. Topologically, residues 298–299 (QQ) are periplasmic. Residues 300 to 320 (LFTLICLFYIGSIIAEPARET) form a helical membrane-spanning segment. Topologically, residues 321–339 (LSASLADARARGSYMGFSR) are cytoplasmic. Residues 340–360 (LGLAIGGAIGYIGGGWLFDLG) traverse the membrane as a helical segment. Residues 361–367 (KSAHQPE) lie on the Periplasmic side of the membrane. Residues 368–388 (LPWMMLGIIGIFTFLALGWQF) form a helical membrane-spanning segment. The Cytoplasmic segment spans residues 389 to 402 (SQKRAARRLLERDA).

This sequence belongs to the major facilitator superfamily. DHA1 family. MdtH (TC 2.A.1.2.21) subfamily.

The protein resides in the cell inner membrane. The chain is Multidrug resistance protein MdtH from Shigella flexneri serotype 5b (strain 8401).